We begin with the raw amino-acid sequence, 98 residues long: Flagellar hook-basal body complex protein FliE (98 aa).

The span at 1-23 (MNNINDLRLNNNISNTNKSQNST) shows a compositional bias: low complexity. Residues 1–24 (MNNINDLRLNNNISNTNKSQNSTG) are disordered.

It belongs to the FliE family.

Its subcellular location is the bacterial flagellum basal body. This Campylobacter jejuni subsp. jejuni serotype O:2 (strain ATCC 700819 / NCTC 11168) protein is Flagellar hook-basal body complex protein FliE.